Consider the following 1332-residue polypeptide: Misshapen-like kinase 1 (1332 aa).

A Protein kinase domain is found at 25–289 (FELVEVVGNG…TEQLLKFPFI (265 aa)). Residues 31-39 (VGNGTYGQV) and Lys54 contribute to the ATP site. The Proton acceptor role is filled by Asp153. 3 disordered regions span residues 300–347 (IQLK…NVPG), 363–383 (KSNS…QRDP), and 395–887 (QRRI…GTMV). The segment covering 317–333 (EETEYEYSGSEEEDDSH) has biased composition (acidic residues). A phosphoserine mark is found at Ser324 and Ser326. The segment covering 371 to 380 (QQQQLQQQQQ) has biased composition (low complexity). Basic and acidic residues predominate over residues 396 to 466 (RRIEEQKEER…EEQRQSERLQ (71 aa)). Residues 479 to 497 (LQQQQQQQQLQKQQQQQLL) show a composition bias toward low complexity. Residues Arg501 and Arg509 each carry the omega-N-methylarginine modification. The span at 518-528 (AWAREVEERTR) shows a compositional bias: basic and acidic residues. Residues 547 to 561 (PEPPIPQASPGPPGP) show a composition bias toward pro residues. Positions 598–608 (RSQSLQDQPTR) are enriched in polar residues. Position 641 is a phosphoserine (Ser641). Residues 670–682 (QRTSSIATALNTS) are compositionally biased toward polar residues. Phosphoserine is present on Ser701. Residues 716 to 729 (PKPPGPPAQPPGPP) are compositionally biased toward pro residues. Residues 736 to 748 (DLRRSDPGWERSD) show a composition bias toward basic and acidic residues. Ser754, Ser763, Ser777, Ser778, and Ser782 each carry phosphoserine. Residues 804–821 (LLKERTLDEAPRPPKKAM) show a composition bias toward basic and acidic residues. The span at 828 to 841 (EEVESSEDDEEEGE) shows a compositional bias: acidic residues. The mediates interaction with RAP2A stretch occupies residues 866-1332 (MVVHDVEEIT…TLNRNCIMNW (467 aa)). Thr891 carries the post-translational modification Phosphothreonine. Residues 902 to 943 (DSNGYTNLPDVVQPSHSPTENSKGQSPPSKDGSGDYQSRGLV) are disordered. Residues 915–929 (PSHSPTENSKGQSPP) are compositionally biased toward polar residues. The CNH domain occupies 1019 to 1306 (NSEILCAALW…KFLCERNDKV (288 aa)).

Belongs to the protein kinase superfamily. STE Ser/Thr protein kinase family. STE20 subfamily. In terms of assembly, interacts with TANC1. Interacts with RAP2A. Isoform 4 interacts with NCK1. Mg(2+) serves as cofactor. Post-translationally, autophosphorylated. As to expression, expressed in the brain, isoform 2 is more abundant than isoform 1. Isoform 3 is ubiquitously expressed. Isoform 1 is most abundant in the skeletal muscle. Isoform 4 is ubiquitously expressed with relative high levels in brain, skeletal muscle, pancreas and testis.

The protein localises to the cytoplasm. It localises to the postsynaptic density. Its subcellular location is the cell projection. The protein resides in the axon. It is found in the dendrite. The protein localises to the golgi apparatus. The enzyme catalyses L-seryl-[protein] + ATP = O-phospho-L-seryl-[protein] + ADP + H(+). It carries out the reaction L-threonyl-[protein] + ATP = O-phospho-L-threonyl-[protein] + ADP + H(+). Its function is as follows. Serine/threonine kinase which acts as a negative regulator of Ras-related Rap2-mediated signal transduction to control neuronal structure and AMPA receptor trafficking. Required for normal synaptic density, dendrite complexity, as well as surface AMPA receptor expression in hippocampal neurons. Can activate the JNK and MAPK14/p38 pathways and mediates stimulation of the stress-activated protein kinase MAPK14/p38 MAPK downstream of the Raf/ERK pathway. Phosphorylates TANC1 upon stimulation by RAP2A, MBP and SMAD1. Has an essential function in negative selection of thymocytes, perhaps by coupling NCK1 to activation of JNK1. Activator of the Hippo signaling pathway which plays a pivotal role in organ size control and tumor suppression by restricting proliferation and promoting apoptosis. MAP4Ks act in parallel to and are partially redundant with STK3/MST2 and STK4/MST2 in the phosphorylation and activation of LATS1/2, and establish MAP4Ks as components of the expanded Hippo pathway. Functionally, isoform 4 can activate the JNK pathway. Involved in the regulation of actin cytoskeleton reorganization, cell-matrix adhesion, cell-cell adhesion and cell migration. This Homo sapiens (Human) protein is Misshapen-like kinase 1.